Here is a 299-residue protein sequence, read N- to C-terminus: Ribosomal RNA small subunit methyltransferase H (299 aa).

Residues 36-38 (GGH), Asp-55, Asp-103, and Gln-110 contribute to the S-adenosyl-L-methionine site. 2 stretches are compositionally biased toward basic and acidic residues: residues 268–282 (KPVRPSEEEIRENPR) and 289–299 (RAAERIEKGGD). A disordered region spans residues 268–299 (KPVRPSEEEIRENPRARSGRLRAAERIEKGGD).

Belongs to the methyltransferase superfamily. RsmH family.

The protein localises to the cytoplasm. It catalyses the reaction cytidine(1402) in 16S rRNA + S-adenosyl-L-methionine = N(4)-methylcytidine(1402) in 16S rRNA + S-adenosyl-L-homocysteine + H(+). Specifically methylates the N4 position of cytidine in position 1402 (C1402) of 16S rRNA. The chain is Ribosomal RNA small subunit methyltransferase H from Thermotoga sp. (strain RQ2).